A 385-amino-acid polypeptide reads, in one-letter code: Aliphatic amidase expression-regulating protein (385 aa).

In terms of assembly, homodimer. Forms a complex with AmiR.

Negatively regulates the expression of the aliphatic amidase operon. AmiC functions by inhibiting the action of AmiR at the protein level. It exhibits protein kinase activity. The protein is Aliphatic amidase expression-regulating protein (amiC) of Pseudomonas aeruginosa (strain ATCC 15692 / DSM 22644 / CIP 104116 / JCM 14847 / LMG 12228 / 1C / PRS 101 / PAO1).